The sequence spans 580 residues: DNA ligase 1 (580 aa).

Glu245 contributes to the ATP binding site. The active-site N6-AMP-lysine intermediate is the Lys247. ATP is bound by residues Arg252, Arg267, Glu297, Phe343, Arg420, and Lys426.

The protein belongs to the ATP-dependent DNA ligase family. Mg(2+) is required as a cofactor.

The enzyme catalyses ATP + (deoxyribonucleotide)n-3'-hydroxyl + 5'-phospho-(deoxyribonucleotide)m = (deoxyribonucleotide)n+m + AMP + diphosphate.. Its function is as follows. DNA ligase that seals nicks in double-stranded DNA during DNA replication, DNA recombination and DNA repair. The protein is DNA ligase 1 of Methanosarcina acetivorans (strain ATCC 35395 / DSM 2834 / JCM 12185 / C2A).